The sequence spans 312 residues: Small ribosomal subunit biogenesis GTPase RsgA (312 aa).

In terms of domain architecture, CP-type G spans 86-245 (QSFLKRPAVA…LADTPGFNRP (160 aa)). GTP contacts are provided by residues 135–138 (TKID) and 187–195 (GPSGVGKTS). Zn(2+)-binding residues include C270, C275, H277, and C283.

The protein belongs to the TRAFAC class YlqF/YawG GTPase family. RsgA subfamily. As to quaternary structure, monomer. Associates with 30S ribosomal subunit, binds 16S rRNA. It depends on Zn(2+) as a cofactor.

The protein localises to the cytoplasm. One of several proteins that assist in the late maturation steps of the functional core of the 30S ribosomal subunit. Helps release RbfA from mature subunits. May play a role in the assembly of ribosomal proteins into the subunit. Circularly permuted GTPase that catalyzes slow GTP hydrolysis, GTPase activity is stimulated by the 30S ribosomal subunit. The polypeptide is Small ribosomal subunit biogenesis GTPase RsgA (Prochlorococcus marinus (strain NATL2A)).